Here is a 102-residue protein sequence, read N- to C-terminus: ATP-dependent Clp protease adapter protein ClpS (102 aa).

It belongs to the ClpS family. Binds to the N-terminal domain of the chaperone ClpA.

Involved in the modulation of the specificity of the ClpAP-mediated ATP-dependent protein degradation. The sequence is that of ATP-dependent Clp protease adapter protein ClpS from Shewanella oneidensis (strain ATCC 700550 / JCM 31522 / CIP 106686 / LMG 19005 / NCIMB 14063 / MR-1).